Consider the following 158-residue polypeptide: Transcription elongation factor GreA (158 aa).

This sequence belongs to the GreA/GreB family.

Functionally, necessary for efficient RNA polymerase transcription elongation past template-encoded arresting sites. The arresting sites in DNA have the property of trapping a certain fraction of elongating RNA polymerases that pass through, resulting in locked ternary complexes. Cleavage of the nascent transcript by cleavage factors such as GreA or GreB allows the resumption of elongation from the new 3'terminus. GreA releases sequences of 2 to 3 nucleotides. The sequence is that of Transcription elongation factor GreA from Baumannia cicadellinicola subsp. Homalodisca coagulata.